Consider the following 632-residue polypeptide: Protein NSP-INTERACTING KINASE 3 (632 aa).

The N-terminal stretch at 1-25 (MEGVRFVVWRLGFLVFVWFFDISSA) is a signal peptide. Residues 26–238 (TLSPTGVNYE…GTRTNGHHVA (213 aa)) are Extracellular-facing. A glycan (N-linked (GlcNAc...) asparagine) is linked at Asn96. 4 LRR repeats span residues 97-121 (LTYL…IGRL), 122-145 (EKLQ…LGEL), 147-168 (NLNY…SLSK), and 169-193 (IEGL…SART). 4 N-linked (GlcNAc...) asparagine glycosylation sites follow: Asn131, Asn155, Asn181, and Asn210. Residues 239–259 (LAFAASFSAAFFVFFTSGMFL) traverse the membrane as a helical segment. Residues 260–632 (WWRYRRNKQI…VEAIELSGPR (373 aa)) are Cytoplasmic-facing. At Thr298 the chain carries Phosphothreonine. One can recognise a Protein kinase domain in the interval 301-584 (FNSKNILGRG…EGDGLAERWE (284 aa)). 307 to 315 (LGRGGYGIV) contacts ATP. Thr324 is modified (phosphothreonine). Lys329 provides a ligand contact to ATP. Ser382 and Ser385 each carry phosphoserine. Residues 415–495 (YLHEQCDPKI…DVFGFGILLL (81 aa)) are interaction with geminivirus NSP protein. Asp428 acts as the Proton acceptor in catalysis. Thr461, Thr462, and Thr467 each carry phosphothreonine. Tyr475 is modified (phosphotyrosine). Ser477 is subject to Phosphoserine. At Thr478 the chain carries Phosphothreonine. Ser482 is modified (phosphoserine). The residue at position 557 (Thr557) is a Phosphothreonine.

It belongs to the protein kinase superfamily. Ser/Thr protein kinase family. As to quaternary structure, oligomer. Interacts with geminivirus nuclear shuttle protein (NSP). Post-translationally, autophosphorylated. Expressed in seedlings, leaves and flowers.

The protein localises to the cell membrane. The enzyme catalyses L-seryl-[protein] + ATP = O-phospho-L-seryl-[protein] + ADP + H(+). The catalysed reaction is L-threonyl-[protein] + ATP = O-phospho-L-threonyl-[protein] + ADP + H(+). With respect to regulation, inhibited by the viral nuclear shuttle protein (NSP) that binds to the region required for oligomerization. Involved in defense response to geminivirus infection. This is Protein NSP-INTERACTING KINASE 3 (NIK3) from Arabidopsis thaliana (Mouse-ear cress).